The chain runs to 849 residues: Coiled-coil domain-containing protein 87 (849 aa).

Residues Arg-387 to Asp-415 adopt a coiled-coil conformation.

The protein belongs to the CCDC87 family.

In terms of biological role, plays a role in spermatogenesis, where it is important for normal sperm head morphology. Also required for the acrosome reaction and thus normal male fertility. In Homo sapiens (Human), this protein is Coiled-coil domain-containing protein 87 (CCDC87).